A 143-amino-acid chain; its full sequence is Large ribosomal subunit protein uL13 (143 aa).

Belongs to the universal ribosomal protein uL13 family. In terms of assembly, part of the 50S ribosomal subunit.

This protein is one of the early assembly proteins of the 50S ribosomal subunit, although it is not seen to bind rRNA by itself. It is important during the early stages of 50S assembly. The protein is Large ribosomal subunit protein uL13 of Caldanaerobacter subterraneus subsp. tengcongensis (strain DSM 15242 / JCM 11007 / NBRC 100824 / MB4) (Thermoanaerobacter tengcongensis).